A 260-amino-acid chain; its full sequence is MQKHYHKLISYLCDFLEKETQKRGFKKVVYGLSGGLDSAVVGVLSQKVFKENAHALLMPSLVSMPESKSDALDLCETFSIPYTEYSIAPYDAIFCSYFKDASLTRKGNFCSRLRMAFLYDYSLKSNSLVIGTSNKSERMLGYGTLFGDLACAINPIGELFKTEVYELAQHLNIPKKILDKPPSADLFVGQSDEKDLGYPYSVIDPLLKDIEALFRTKPIHLETLTQLGYDETLVKNTISRIQKNAFKLELPTIAKRFDPK.

Residue 31-38 coordinates ATP; it reads GLSGGLDS. A Mg(2+)-binding site is contributed by Asp37. Arg112 provides a ligand contact to deamido-NAD(+). Thr132 contacts ATP. Glu137 is a binding site for Mg(2+). 2 residues coordinate ATP: Lys161 and Ser183.

Belongs to the NAD synthetase family. Homodimer.

The catalysed reaction is deamido-NAD(+) + NH4(+) + ATP = AMP + diphosphate + NAD(+) + H(+). The protein operates within cofactor biosynthesis; NAD(+) biosynthesis; NAD(+) from deamido-NAD(+) (ammonia route): step 1/1. Catalyzes the ATP-dependent amidation of deamido-NAD to form NAD. Uses ammonia as a nitrogen source. The polypeptide is NH(3)-dependent NAD(+) synthetase (Helicobacter acinonychis (strain Sheeba)).